A 509-amino-acid chain; its full sequence is Dihydrolipoyl dehydrogenase, mitochondrial (509 aa).

Residues 1 to 35 (MQSWSRVYCSLAKRGHFNRISHGLQGLSAVPLRTY) constitute a mitochondrion transit peptide. K66 carries the N6-acetyllysine; alternate modification. The residue at position 66 (K66) is an N6-succinyllysine; alternate. FAD is bound by residues 71–80 (EKNETLGGTC) and K89. A disulfide bond links C80 and C85. Residues K104, K122, K132, and K143 each carry the N6-acetyllysine; alternate modification. N6-succinyllysine; alternate occurs at positions 104, 122, 132, and 143. Residue G154 coordinates FAD. Residues K159 and K166 each carry the N6-succinyllysine modification. 183–185 (TGS) serves as a coordination point for FAD. NAD(+) is bound by residues 220-227 (GAGVIGVE) and E243. N6-succinyllysine occurs at positions 273 and 277. V278 contributes to the NAD(+) binding site. Phosphoserine occurs at positions 285 and 297. G314 is an NAD(+) binding site. At K346 the chain carries N6-acetyllysine. Residues D355 and 361–364 (MLAH) each bind FAD. K410 is modified (N6-acetyllysine; alternate). K410 carries the post-translational modification N6-succinyllysine; alternate. K417 and K420 each carry N6-acetyllysine. Position 430 is an N6-succinyllysine (K430). The Proton acceptor role is filled by H487. A Phosphoserine modification is found at S502. K505 is modified (N6-acetyllysine; alternate). N6-succinyllysine; alternate is present on K505.

Belongs to the class-I pyridine nucleotide-disulfide oxidoreductase family. As to quaternary structure, homodimer. Part of the multimeric pyruvate dehydrogenase complex that contains multiple copies of pyruvate dehydrogenase (subunits PDHA (PDHA1 or PDHA2) and PDHB, E1), dihydrolipoamide acetyltransferase (DLAT, E2) and lipoamide dehydrogenase (DLD, E3). These subunits are bound to an inner core composed of about 48 DLAT and 12 PDHX molecules (by non covalent bonds). The 2-oxoglutarate dehydrogenase complex is composed of OGDH (2-oxoglutarate dehydrogenase; E1), DLST (dihydrolipoamide succinyltransferase; E2), DLD (dihydrolipoamide dehydrogenase; E3) and the assembly factor KGD4. It contains multiple copies of the three enzymatic components (E1, E2 and E3). In the nucleus, the 2-oxoglutarate dehydrogenase complex associates with KAT2A. Interacts with PDHX. FAD serves as cofactor. In terms of processing, tyrosine phosphorylated.

Its subcellular location is the mitochondrion matrix. It is found in the nucleus. The protein localises to the cell projection. It localises to the cilium. The protein resides in the flagellum. Its subcellular location is the cytoplasmic vesicle. It is found in the secretory vesicle. The protein localises to the acrosome. The enzyme catalyses N(6)-[(R)-dihydrolipoyl]-L-lysyl-[protein] + NAD(+) = N(6)-[(R)-lipoyl]-L-lysyl-[protein] + NADH + H(+). Its function is as follows. Lipoamide dehydrogenase is a component of the glycine cleavage system as well as an E3 component of three alpha-ketoacid dehydrogenase complexes (pyruvate-, alpha-ketoglutarate-, and branched-chain amino acid-dehydrogenase complex). The 2-oxoglutarate dehydrogenase complex is mainly active in the mitochondrion. A fraction of the 2-oxoglutarate dehydrogenase complex also localizes in the nucleus and is required for lysine succinylation of histones: associates with KAT2A on chromatin and provides succinyl-CoA to histone succinyltransferase KAT2A. In monomeric form may have additional moonlighting function as serine protease. Involved in the hyperactivation of spermatazoa during capacitation and in the spermatazoal acrosome reaction. The polypeptide is Dihydrolipoyl dehydrogenase, mitochondrial (DLD) (Macaca fascicularis (Crab-eating macaque)).